We begin with the raw amino-acid sequence, 259 residues long: LOB domain-containing protein CRL1 (259 aa).

The LOB domain maps to 6 to 108 (SPCGACKFLR…AQLASLKAAA (103 aa)).

Belongs to the LOB domain-containing protein family. In terms of assembly, can form homodimers. In terms of tissue distribution, expressed in unelongating basal internodes, at the base of shoot in parenchyma cells adjacent to the peripheral vascular cylinder of the stem, and root pericycle cells. Expressed in lateral and adventitious root primordia, tiller primordia, vascular tissues, scutellum, and young pedicels.

It localises to the nucleus. In terms of biological role, acts as a positive regulator of adventitious (crown) root formation by promoting its initiation. Acts as a positive regulator of lateral root formation. Regulated by the auxin response factor and transcriptional activator ARF23/ARF1. Involved in auxin-mediated cell dedifferentiation, and may promote the initial cell division in the pericycle cells adjacent to the peripheral vascular cylinder at the base of the stem. May act upstream of the gene regulatory network controlling adventitious root (crown) development. The chain is LOB domain-containing protein CRL1 from Oryza sativa subsp. japonica (Rice).